The following is a 109-amino-acid chain: Tyrosine-protein phosphatase 6 (109 aa).

A Tyrosine-protein phosphatase domain is found at 1 to 109 (YNINVIVMVC…SEDETTPLCV (109 aa)). A substrate-binding site is contributed by Asp-76.

It belongs to the protein-tyrosine phosphatase family.

The enzyme catalyses O-phospho-L-tyrosyl-[protein] + H2O = L-tyrosyl-[protein] + phosphate. The chain is Tyrosine-protein phosphatase 6 (STY-6) from Styela plicata (Wrinkled sea squirt).